The chain runs to 234 residues: MTENFILGRNNKLEHELKALADYINIPYSILQPYQSECFVRHYTKGQVIYFSPQESSNIYFLIEGNIIREHYNQNGDVYRYFNKEQVLFPISNLFHPKEVNELCTALTDCTVLGLPRELMAFLCKANDDIFLTLFALINDNEQQHMNYNMALTSKFAKDRIIKLLCHLCQTVGYDQDEFYEIKQFLTIQLMSDMAGISRETAGHIIHELKDEKLVVKDHKNWLVSKHLFNDVCV.

A nucleoside 3',5'-cyclic phosphate is bound at residue 40-129; it reads VRHYTKGQVI…MAFLCKANDD (90 aa). The region spanning 155-228 is the HTH crp-type domain; that stretch reads KFAKDRIIKL…HKNWLVSKHL (74 aa). The segment at residues 188–207 is a DNA-binding region (H-T-H motif); the sequence is IQLMSDMAGISRETAGHIIH.

The protein resides in the cytoplasm. Its function is as follows. Positively regulates the expression of the arcABDCR operon under anaerobic conditions, thus playing an essential role in arginine catabolism. May also control the expression of genes encoding proteins which are involved in anaerobic metabolism. Can bind cyclic AMP. This Staphylococcus aureus (strain Mu50 / ATCC 700699) protein is HTH-type transcriptional regulator ArcR (arcR).